Here is a 93-residue protein sequence, read N- to C-terminus: Islet amyloid polypeptide (93 aa).

The signal sequence occupies residues 1-23 (MRCISRLPAVLLILSVALGHLRA). The propeptide occupies 24 to 35 (TPVGSGTNPQVD). Residues Cys-39 and Cys-44 are joined by a disulfide bond. Tyr-74 carries the tyrosine amide modification. Positions 78 to 93 (NVAEDPNRESLDFLLL) are excised as a propeptide.

This sequence belongs to the calcitonin family. As to quaternary structure, can form homodimers. Interacts with IDE and INS. Interaction with INS inhibits homodimerization and fibril formation. Abundant in the islets of Langerhans but is not present in the brain or seven other tissues examined.

It localises to the secreted. Amylin/IAPP is a glucoregulatory peptide hormone that plays an important role in the regulation of energy homeostasis. Selectively inhibits insulin-stimulated glucose utilization and glycogen deposition in muscle, while not affecting adipocyte glucose metabolism. IAPP function is mediated by the CALCR-RAMPs (AMYRs) receptor complexes. Amylin can also bind CALCR receptor in the absence of RAMPs, although it is more selective for AMYRs. The chain is Islet amyloid polypeptide from Rattus norvegicus (Rat).